A 180-amino-acid polypeptide reads, in one-letter code: Nucleoplasmin-3 (180 aa).

At Ala2 the chain carries N-acetylalanine. Ser13 and Ser16 each carry phosphoserine. The residue at position 27 (Arg27) is an Omega-N-methylarginine. Residues 141-180 (TMSNDVSEEESEEEEEEEDSDEEEAELCPILPAKKQGGRP) are disordered. The span at 146–166 (VSEEESEEEEEEEDSDEEEAE) shows a compositional bias: acidic residues. Ser147, Ser151, and Ser160 each carry phosphoserine.

The protein belongs to the nucleoplasmin family. Interacts with NPM (via N-terminus). Forms a pentamer with NPM at a ratio 4:1 (NPM3/NPM). Two pentamers form a decamer. Post-translationally, phosphorylated.

The protein localises to the nucleus. Its subcellular location is the nucleolus. Its function is as follows. Plays a role in the regulation of diverse cellular processes such as ribosome biogenesis, chromatin remodeling or protein chaperoning. Modulates the histone chaperone function and the RNA-binding activity of nucleolar phosphoprotein B23/NPM. Efficiently mediates chromatin remodeling when included in a pentamer containing NPM3 and NPM. In Pongo abelii (Sumatran orangutan), this protein is Nucleoplasmin-3 (NPM3).